A 520-amino-acid chain; its full sequence is Sodium-dependent dicarboxylate transporter SdcS (520 aa).

The next 14 membrane-spanning stretches (helical) occupy residues 30 to 50 (AGQL…LLFF), 55 to 75 (LPWK…WWIT), 77 to 97 (AIPI…GHIL), 104 to 124 (SEYG…AIAM), 160 to 180 (SMFV…LAII), 207 to 227 (IGYA…PLII), 242 to 262 (FAKW…ITWL), 298 to 318 (KVVQ…EFLL), 323 to 343 (VTSS…LFII), 362 to 382 (ELPW…KGIS), 399 to 419 (GVSP…LTEV), 428 to 448 (MILP…LLLM), 452 to 472 (AMAA…AIIF), and 491 to 511 (LISA…VLGI).

It belongs to the SLC13A/DASS transporter (TC 2.A.47) family. NADC subfamily.

It localises to the cell membrane. Functionally, mediates the transport of the dicarboxylates fumarate, malate, and succinate across the cytoplasmic membrane via a Na(+)-electrochemical gradient. The polypeptide is Sodium-dependent dicarboxylate transporter SdcS (sdcS) (Staphylococcus aureus (strain NCTC 8325 / PS 47)).